We begin with the raw amino-acid sequence, 520 residues long: Cyclin-L2 (520 aa).

2 cyclin-like regions span residues 81–183 (ELIQ…RVLK) and 196–280 (KIIV…KILQ). Positions 309 to 520 (RAKGLLPPGS…DHPGHSRHRR (212 aa)) are disordered. Phosphoserine is present on residues S330, S337, S347, and S350. A compositionally biased stretch (basic and acidic residues) spans 356–366 (RKMEGPKKAKG). At S368 the chain carries Phosphoserine. The segment at 384–422 (RSREQSYSRSPSRSASPKRRKSDSGSTSGGSKSQSRSRS) is RS. The span at 407–429 (SGSTSGGSKSQSRSRSRSDSPPR) shows a compositional bias: low complexity. Residues 440 to 453 (SEVRGSRKSKDCKH) show a composition bias toward basic and acidic residues. Positions 454-471 (LTQKPHKSRSRSSSRSRS) are enriched in basic residues. Basic and acidic residues-rich tracts occupy residues 472-481 (RSRERTDSSG) and 489-514 (YYRD…DHPG).

The protein belongs to the cyclin family. Cyclin L subfamily. In terms of assembly, interacts with CDK11A, CDK11B, CDK12, CDK13 and POLR2A, the hyperphosphorylated C-terminal domain (CTD) of RNA polymerase II. May form a ternary complex with CDK11B and casein kinase II (CKII). Interacts with pre-mRNA-splicing factors, including at least SRSF1, SRSF2 and SRSF7/SLU7.

The protein localises to the nucleus speckle. It localises to the nucleus. It is found in the nucleoplasm. Functionally, involved in pre-mRNA splicing. May induce cell death, possibly by acting on the transcription and RNA processing of apoptosis-related factors. This Rattus norvegicus (Rat) protein is Cyclin-L2 (Ccnl2).